The chain runs to 130 residues: Nascent polypeptide-associated complex protein (130 aa).

Residues proline 8–lysine 75 enclose the NAC-A/B domain.

It belongs to the NAC-alpha family. Homodimer. Interacts with the ribosome. Binds ribosomal RNA.

Contacts the emerging nascent chain on the ribosome. The polypeptide is Nascent polypeptide-associated complex protein (Methanococcus aeolicus (strain ATCC BAA-1280 / DSM 17508 / OCM 812 / Nankai-3)).